Reading from the N-terminus, the 429-residue chain is 3-phosphoshikimate 1-carboxyvinyltransferase (429 aa).

3-phosphoshikimate-binding residues include Lys-25, Ser-26, and Arg-30. Lys-25 contacts phosphoenolpyruvate. Gly-99 and Arg-127 together coordinate phosphoenolpyruvate. Positions 173, 174, 175, 201, 317, 340, and 344 each coordinate 3-phosphoshikimate. Residue Gln-175 participates in phosphoenolpyruvate binding. Asp-317 serves as the catalytic Proton acceptor. Arg-348, Arg-390, and Lys-415 together coordinate phosphoenolpyruvate.

Belongs to the EPSP synthase family. As to quaternary structure, monomer.

The protein localises to the cytoplasm. The enzyme catalyses 3-phosphoshikimate + phosphoenolpyruvate = 5-O-(1-carboxyvinyl)-3-phosphoshikimate + phosphate. It participates in metabolic intermediate biosynthesis; chorismate biosynthesis; chorismate from D-erythrose 4-phosphate and phosphoenolpyruvate: step 6/7. In terms of biological role, catalyzes the transfer of the enolpyruvyl moiety of phosphoenolpyruvate (PEP) to the 5-hydroxyl of shikimate-3-phosphate (S3P) to produce enolpyruvyl shikimate-3-phosphate and inorganic phosphate. The polypeptide is 3-phosphoshikimate 1-carboxyvinyltransferase (Pseudoalteromonas atlantica (strain T6c / ATCC BAA-1087)).